A 102-amino-acid polypeptide reads, in one-letter code: Plastocyanin (102 aa).

Residues Ala-1–Lys-102 form the Plastocyanin-like domain. Positions 37, 87, 90, and 95 each coordinate Cu cation.

Belongs to the plastocyanin family. Cu(2+) is required as a cofactor.

It localises to the plastid. The protein localises to the chloroplast thylakoid membrane. Participates in electron transfer between P700 and the cytochrome b6-f complex in photosystem I. The polypeptide is Plastocyanin (PETE) (Dryopteris crassirhizoma (Thick stemmed wood fern)).